Consider the following 277-residue polypeptide: MAAVSVFQAPVGGFSFDNCRRNAVLEADFAKKGFKLPKARKTGTTIAGVVYKDGIVLGADTRATEGMVVADKNCSKIHFISPNIYCCGAGTAADTDMTTQLISSNLELHSLTTGRLPRVVTANRMLKQMLFRYQGYIGAALVLGGVDVTGPHLYSIYPHGSTDKLPYVTMGSGSLAAMAVFEDKFRPDMEEEEAKKLVSEAIAAGIFNDLGSGSNIDLCVISKSKLDFLRPYSVPNKKGTRFGRYRCEKGTTAVLTEKVTPLELEVLEEIVQTMDTS.

Residues 1–43 constitute a propeptide, removed in mature form; the sequence is MAAVSVFQAPVGGFSFDNCRRNAVLEADFAKKGFKLPKARKTG. T44 (nucleophile) is an active-site residue.

It belongs to the peptidase T1B family. As to quaternary structure, the 26S proteasome consists of a 20S proteasome core and two 19S regulatory subunits. The 20S proteasome core is a barrel-shaped complex made of 28 subunits that are arranged in four stacked rings. The two outer rings are each formed by seven alpha subunits, and the two inner rings are formed by seven beta subunits. The proteolytic activity is exerted by three beta-subunits PSMB5, PSMB6 and PSMB7.

It is found in the cytoplasm. The protein localises to the nucleus. It catalyses the reaction Cleavage of peptide bonds with very broad specificity.. Component of the 20S core proteasome complex involved in the proteolytic degradation of most intracellular proteins. This complex plays numerous essential roles within the cell by associating with different regulatory particles. Associated with two 19S regulatory particles, forms the 26S proteasome and thus participates in the ATP-dependent degradation of ubiquitinated proteins. The 26S proteasome plays a key role in the maintenance of protein homeostasis by removing misfolded or damaged proteins that could impair cellular functions, and by removing proteins whose functions are no longer required. Associated with the PA200 or PA28, the 20S proteasome mediates ubiquitin-independent protein degradation. This type of proteolysis is required in several pathways including spermatogenesis (20S-PA200 complex) or generation of a subset of MHC class I-presented antigenic peptides (20S-PA28 complex). Within the 20S core complex, PSMB7 displays a trypsin-like activity. In Rattus norvegicus (Rat), this protein is Proteasome subunit beta type-7 (Psmb7).